Here is an 82-residue protein sequence, read N- to C-terminus: U7-hexatoxin-Mg1a (82 aa).

Residues M1–A26 form the signal peptide. Positions A27–R44 are excised as a propeptide. 4 disulfides stabilise this stretch: C46-C62, C51-C67, C61-C77, and C69-C75. An Arginine amide modification is found at R80.

It belongs to the rTX family. Expressed by the venom gland.

The protein resides in the secreted. Functionally, induces flaccid paralysis when injected into lepidopteran larvae. Intracranial injection into mice causes awkwardness of movement and laboured respiration until death. The chain is U7-hexatoxin-Mg1a from Macrothele gigas (Japanese funnel web spider).